The chain runs to 88 residues: ATP synthase F(0) complex subunit f, mitochondrial (88 aa).

Ala-2 carries the N-acetylalanine modification. Ser-3 carries the phosphoserine modification. Lys-16 bears the N6-acetyllysine mark. A helical transmembrane segment spans residues 62–79; that stretch reads MVLAAYVVFNYCRSYKEL.

This sequence belongs to the ATPase F chain family. In terms of assembly, component of the ATP synthase complex composed at least of ATP5F1A/subunit alpha, ATP5F1B/subunit beta, ATP5MC1/subunit c (homooctomer), MT-ATP6/subunit a, MT-ATP8/subunit 8, ATP5ME/subunit e, ATP5MF/subunit f, ATP5MG/subunit g, ATP5MK/subunit k, ATP5MJ/subunit j, ATP5F1C/subunit gamma, ATP5F1D/subunit delta, ATP5F1E/subunit epsilon, ATP5PF/subunit F6, ATP5PB/subunit b, ATP5PD/subunit d, ATP5PO/subunit OSCP. ATP synthase complex consists of a soluble F(1) head domain (subunits alpha(3) and beta(3)) - the catalytic core - and a membrane F(0) domain - the membrane proton channel (subunits c, a, 8, e, f, g, k and j). These two domains are linked by a central stalk (subunits gamma, delta, and epsilon) rotating inside the F1 region and a stationary peripheral stalk (subunits F6, b, d, and OSCP).

The protein localises to the mitochondrion. It localises to the mitochondrion inner membrane. Functionally, subunit f, of the mitochondrial membrane ATP synthase complex (F(1)F(0) ATP synthase or Complex V) that produces ATP from ADP in the presence of a proton gradient across the membrane which is generated by electron transport complexes of the respiratory chain. ATP synthase complex consist of a soluble F(1) head domain - the catalytic core - and a membrane F(1) domain - the membrane proton channel. These two domains are linked by a central stalk rotating inside the F(1) region and a stationary peripheral stalk. During catalysis, ATP synthesis in the catalytic domain of F(1) is coupled via a rotary mechanism of the central stalk subunits to proton translocation. In vivo, can only synthesize ATP although its ATP hydrolase activity can be activated artificially in vitro. Part of the complex F(0) domain. The polypeptide is ATP synthase F(0) complex subunit f, mitochondrial (Sus scrofa (Pig)).